A 145-amino-acid polypeptide reads, in one-letter code: uncharacterized protein (145 aa).

A helical membrane pass occupies residues 97 to 117 (ISMLLLIVIIAIGLTISYMVI).

The protein localises to the membrane. This is an uncharacterized protein from Methanocaldococcus jannaschii (strain ATCC 43067 / DSM 2661 / JAL-1 / JCM 10045 / NBRC 100440) (Methanococcus jannaschii).